Consider the following 319-residue polypeptide: GTP cyclohydrolase MptA (319 aa).

Belongs to the GTP cyclohydrolase IV family. As to quaternary structure, homodimer. It depends on Fe(2+) as a cofactor.

The enzyme catalyses GTP + H2O = 7,8-dihydroneopterin 2',3'-cyclic phosphate + formate + diphosphate + H(+). It functions in the pathway cofactor biosynthesis; 5,6,7,8-tetrahydromethanopterin biosynthesis. Its function is as follows. Converts GTP to 7,8-dihydro-D-neopterin 2',3'-cyclic phosphate, the first intermediate in the biosynthesis of coenzyme methanopterin. The chain is GTP cyclohydrolase MptA from Methanosarcina barkeri (strain Fusaro / DSM 804).